The following is a 256-amino-acid chain: Vesicle-associated protein 1-1 (256 aa).

Met1 carries the post-translational modification N-acetylmethionine. Residues 1-232 lie on the Cytoplasmic side of the membrane; sequence MSNIDLIGMS…RRESKKSQSG (232 aa). At Ser2 the chain carries N-acetylserine; in Vesicle-associated protein 1-1, N-terminally processed. The MSP domain maps to 22–142; the sequence is LLTVEPLDLQ…EETKLRVTYV (121 aa). Residues 142 to 169 form a disordered region; the sequence is VAPPRPPSPVHEGSEEGSSPRASVSDNG. The residue at position 149 (Ser149) is a Phosphoserine. Polar residues predominate over residues 157–169; that stretch reads EGSSPRASVSDNG. Residues 187–232 adopt a coiled-coil conformation; that stretch reads HQENTSEARALITKLTEEKQSAIQLNNRLQRELDQLRRESKKSQSG. A helical; Anchor for type IV membrane protein transmembrane segment spans residues 233 to 253; it reads GIPFMYVLLVGLIGLILGYIM.

The protein belongs to the VAMP-associated protein (VAP) (TC 9.B.17) family. In terms of assembly, homodimer or homooligomer. Interacts with the cowpea mosaic virus (CPMV) NTP-binding protein (NTB). Interacts with NET3C.

Its subcellular location is the endoplasmic reticulum membrane. The protein resides in the protein storage vacuole membrane. Its function is as follows. Part of a membrane-cytoskeletal adapter complex that forms a bridge between the endoplasmic reticulum and the plasma membrane. Associates with microtubules. This Arabidopsis thaliana (Mouse-ear cress) protein is Vesicle-associated protein 1-1 (PVA11).